A 141-amino-acid chain; its full sequence is HTH-type transcriptional repressor NsrR (141 aa).

Residues 2 to 129 enclose the HTH rrf2-type domain; sequence QLTSFTDYGL…DNYTLADLVE (128 aa). The H-T-H motif DNA-binding region spans 28 to 51; sequence ISEVTDVYGVSRNHMVKIINQLSR. [2Fe-2S] cluster contacts are provided by Cys91, Cys96, and Cys102.

Requires [2Fe-2S] cluster as cofactor.

Its function is as follows. Nitric oxide-sensitive repressor of genes involved in protecting the cell against nitrosative stress. May require iron for activity. The polypeptide is HTH-type transcriptional repressor NsrR (Escherichia fergusonii (strain ATCC 35469 / DSM 13698 / CCUG 18766 / IAM 14443 / JCM 21226 / LMG 7866 / NBRC 102419 / NCTC 12128 / CDC 0568-73)).